Reading from the N-terminus, the 202-residue chain is Transcription factor IBH1 (202 aa).

Pro residues predominate over residues 1-16 (MDAKRTPPPPTPPNPN). The disordered stretch occupies residues 1–33 (MDAKRTPPPPTPPNPNPSVIGSGAAADGGGFGR). A bHLH domain is found at 136–185 (TSAAARAVPPPPRQQGEPPRADALRRLVPGGAGMEYSSLLEETADYLRSL).

It belongs to the bHLH protein family. In terms of assembly, interacts with ILI1.

Its function is as follows. Atypical and probable non DNA-binding bHLH transcription factor that acts as a negative regulator of cell elongation and plant development. Binds the transcription factor ILI1 and forms a heterodimer of antagonistic bHLH transcription factors that function downstream of BZR1 to mediate brassinosteroid regulation of cell elongation and lamina inclination. This Oryza sativa subsp. indica (Rice) protein is Transcription factor IBH1 (IBH1).